The sequence spans 681 residues: Propionyl-CoA carboxylase alpha chain (681 aa).

The 466-residue stretch at 1-466 (MFNKILIANR…TTAFIAEEYP (466 aa)) folds into the Biotin carboxylation domain. ATP-binding positions include Lys116, 148 to 209 (SNQI…PRHI), Glu200, and Asn235. An ATP-grasp domain is found at 120–317 (KKIAQEANVS…LVEQMIRVAA (198 aa)). Positions 275, 288, and 290 each coordinate Mg(2+). Mn(2+) is bound by residues Glu275, Glu288, and Asn290. Glu288 is an active-site residue. Biotin is bound at residue Phe348. Positions 602–681 (LMPEKLPPDT…AVDDVIMEFE (80 aa)) constitute a Biotinyl-binding domain. Lys647 bears the N6-biotinyllysine mark.

The holoenzyme is a dodecamer composed of 6 PccA/alpha subunits and 6 PccB/beta subunits. Requires Mg(2+) as cofactor. The cofactor is Mn(2+). Biotin is required as a cofactor. Post-translationally, the biotin cofactor is covalently attached to the C-terminal biotinyl-binding domain and is required for the catalytic activity.

The catalysed reaction is propanoyl-CoA + hydrogencarbonate + ATP = (S)-methylmalonyl-CoA + ADP + phosphate + H(+). Its pathway is metabolic intermediate metabolism; propanoyl-CoA degradation; succinyl-CoA from propanoyl-CoA: step 1/3. This is one of the 2 subunits of the biotin-dependent propionyl-CoA carboxylase (PCC), the enzyme catalyzing the carboxylation of propionyl-CoA/propanoyl-CoA to D-methylmalonyl-CoA/(S)-methylmalonyl-CoA. Within the holoenzyme, the alpha subunit catalyzes the ATP-dependent carboxylation of the biotin carried by the biotin carboxyl carrier (BCC) domain, while the beta subunit then tranfers the carboxyl group from carboxylated biotin to propionyl-CoA. This is Propionyl-CoA carboxylase alpha chain from Ruegeria pomeroyi (strain ATCC 700808 / DSM 15171 / DSS-3) (Silicibacter pomeroyi).